The sequence spans 447 residues: Serine/threonine-protein phosphatase 2A 55 kDa regulatory subunit B alpha isoform (447 aa).

Ala-2 carries the N-acetylalanine modification. WD repeat units lie at residues 11 to 80, 94 to 174, 175 to 218, 227 to 270, 288 to 325, 347 to 381, and 414 to 446; these read QWCF…FQSH, EKIN…IFAN, AHTY…VDIK, EVIT…KLFE, ISDV…TYQV, ECCW…TLEA, and DFNK…QDKV.

This sequence belongs to the phosphatase 2A regulatory subunit B family. In terms of assembly, PP2A consists of a common heterodimeric core enzyme, composed of a 36 kDa catalytic subunit (subunit C) and a 65 kDa constant regulatory subunit (PR65 or subunit A), that associates with a variety of regulatory subunits. Proteins that associate with the core dimer include three families of regulatory subunits B (the R2/B/PR55/B55, R3/B''/PR72/PR130/PR59 and R5/B'/B56 families), the 48 kDa variable regulatory subunit, viral proteins, and cell signaling molecules. Interacts with the PP2A C catalytic subunit PPP2CA. Interacts with the PP2A A subunit PPP2R1A. Interacts with TP53. Interacts with IER5. Interacts with MFHAS1; the interaction is direct. Interacts with PABIR1/FAM122A (via its N-terminus); the interaction is direct and inhibits PP2A activity. Interacts with ARPP19; the interaction is direct and inhibits PP2A activity. Interacts with CRTC3. Expressed in all tissues examined.

Functionally, substrate-recognition subunit of protein phosphatase 2A (PP2A) that plays a key role in cell cycle by controlling mitosis entry and exit. Involved in chromosome clustering during late mitosis by mediating dephosphorylation of MKI67. Essential for serine/threonine-protein phosphatase 2A-mediated dephosphorylation of WEE1, preventing its ubiquitin-mediated proteolysis, increasing WEE1 protein levels, and promoting the G2/M checkpoint. The chain is Serine/threonine-protein phosphatase 2A 55 kDa regulatory subunit B alpha isoform (PPP2R2A) from Homo sapiens (Human).